Reading from the N-terminus, the 626-residue chain is UvrABC system protein C (626 aa).

Positions 20 to 97 (ECSGVYKMLD…IKKFQPKFNI (78 aa)) constitute a GIY-YIG domain. Positions 207–242 (RELQENLSKKMQELSSQMRFEEAAEIRDRIKALSYV) constitute a UVR domain.

This sequence belongs to the UvrC family. In terms of assembly, interacts with UvrB in an incision complex.

Its subcellular location is the cytoplasm. Its function is as follows. The UvrABC repair system catalyzes the recognition and processing of DNA lesions. UvrC both incises the 5' and 3' sides of the lesion. The N-terminal half is responsible for the 3' incision and the C-terminal half is responsible for the 5' incision. This Rickettsia typhi (strain ATCC VR-144 / Wilmington) protein is UvrABC system protein C.